The sequence spans 434 residues: Glutamate-1-semialdehyde 2,1-aminomutase 1 (434 aa).

Lys270 is subject to N6-(pyridoxal phosphate)lysine.

This sequence belongs to the class-III pyridoxal-phosphate-dependent aminotransferase family. HemL subfamily. Homodimer. The cofactor is pyridoxal 5'-phosphate.

It is found in the cytoplasm. The catalysed reaction is (S)-4-amino-5-oxopentanoate = 5-aminolevulinate. It functions in the pathway porphyrin-containing compound metabolism; protoporphyrin-IX biosynthesis; 5-aminolevulinate from L-glutamyl-tRNA(Glu): step 2/2. This is Glutamate-1-semialdehyde 2,1-aminomutase 1 from Bacillus cereus (strain ATCC 10987 / NRS 248).